A 238-amino-acid chain; its full sequence is MPKKLSKRFKEALAKVDQNQTYAPLEALQLLKETATAKFNESAEAHIRLGIDPKYTDQQLRTTVSLPKGTGQEVRVAVIARGEKVQEANNAGADIVGSEELIEEIFKGMMDFEVLIATPDMMPKVAKLGRLLGPRGLMPSPKGGTVTADLTNAITEFKAGKLEFRADRTGIVHVMFGKASFTPEDLLANLKALQETVDRNRPSGAKGRYWRSVFVSASMGPSIAVDINALRDLKLTEV.

The protein belongs to the universal ribosomal protein uL1 family. Part of the 50S ribosomal subunit.

Its function is as follows. Binds directly to 23S rRNA. The L1 stalk is quite mobile in the ribosome, and is involved in E site tRNA release. In terms of biological role, protein L1 is also a translational repressor protein, it controls the translation of the L11 operon by binding to its mRNA. This Rippkaea orientalis (strain PCC 8801 / RF-1) (Cyanothece sp. (strain PCC 8801)) protein is Large ribosomal subunit protein uL1.